We begin with the raw amino-acid sequence, 896 residues long: MAARAVLDEFTAPAEKAELLEQSRGRIEGLFGVSLAVLGALGAEEPLPARIWLQLCGAQEAVHSAKEYIKGICEPELEERECYPKDMHCIFVGAESLFLKSLIQDTCADLCILDIGLLGIRGSAEAVVMARSHIQQFVKLFENKENLPSSQKESEVKREFKQFVEAHADNYTMDLLILPTSLKKELLTLTQGEENLFETGDDEVIEMRDSQQTEFTQNAATGLNISRDETVLQEEARNKAGTPVSELTKQMDTVLSSSPDVLFDPINGLTPDEEALSNERICQKRRFSDSEERHTKKQFSLENVQEGEILHDAKTLAGNVIADLSDSSADSENLSPDIKETTEEMEYNILVNFFKTMGYSQEIVEKVIKVYGPSTEPLLLLEEIEKENKRFQEDREFSAGTVYPETNKTKNKGVYSSTNELTTDSTPKKTQAHTQQNMVEKFSQLPFKVEAKPCTSNCRINTFRTVPIEQKHEVWGSNQNYICNTDPETDGLSPSVASPSPKEVNFVSRGASSHQPRVPLFPENGLHQQPEPLLPNNMKSACEKRLGCCSSPHSKPNCSTLSPPMPLPQLLPSVTDARSAGPSDHIDSSVTGVQRFRDTLKIPYKLELKNEPGRTDLKHIVIDGSNVAITHGLKKFFSCRGIAIAVEYFWKLGNRNITVFVPQWRTRRDPNVTEQHFLTQLQELGILSLTPARMVFGERIASHDDRFLLHLADKTGGIIVTNDNFREFVNESVSWREIITKRLLQYTFVGDIFMVPDDPLGRSGPRLEEFLQKEVCLRDMQPLLSALPNVGMFDPSFRVPGTQAASTSHQPPTRIQGAPSSHWLPQQPHFPLLPALPSLQQNLPMPAQRSSAETNELREALLKIFPDSEQRLKIDQILVAHPYMKDLNALSAMVLD.

One can recognise a KH-like domain in the interval glutamine 59–asparagine 143. Serine 226 is modified (phosphoserine). Phosphothreonine is present on threonine 242. Phosphoserine occurs at positions 258 and 300. Disordered stretches follow at residues tyrosine 403–threonine 430 and glutamate 488–valine 507. Positions valine 414–threonine 430 are enriched in polar residues. Serine 562 is subject to Phosphoserine. Positions leucine 617–glutamate 769 constitute an RNase NYN domain. The interval glycine 801–serine 821 is disordered. Residues glutamine 803 to threonine 813 are compositionally biased toward polar residues. A coCUN region spans residues arginine 849 to aspartate 896.

It belongs to the N4BP1 family. Interacts with NEDD4. Interacts with ITCH (via WW domain 2). In terms of processing, proteolytically cleaved by CASP8 downstream of TLR3 or TLR4, leading to its inactivation. Mainly cleaved at Asp-490 by CASP8. Cleaved by caspase-like protein MALT1 in T-cells following TCR-mediated activation, leading to its inactivation and subsequent viral reactivation during HIV-1 infection. Mono- and polyubiquitinated on the CoCUN region. Monoubiquitinated by NEDD4. Polyubiquitinated, leading to its degradation by the proteasome. Sumoylated with SUMO1, abrogating polyubiquitination and subsequent degradation. Desumoylated by SENP1, leading to accumulation in PML nuclear bodies. In terms of tissue distribution, detected in heart, lung, brain, liver, skeletal muscle, pancreas, kidney, spleen, testis and ovary.

It is found in the cytoplasm. It localises to the cytosol. The protein localises to the nucleus. The protein resides in the nucleolus. Its subcellular location is the PML body. With respect to regulation, proteolytic cleavage by CASP8 or MALT1 leads to its inactivation. Its function is as follows. Potent suppressor of cytokine production that acts as a regulator of innate immune signaling and inflammation. Acts as a key negative regulator of select cytokine and chemokine responses elicited by TRIF-independent Toll-like receptors (TLRs), thereby limiting inflammatory cytokine responses to minor insults. In response to more threatening pathogens, cleaved by CASP8 downstream of TLR3 or TLR4, leading to its inactivation, thereby allowing production of inflammatory cytokines. Acts as a restriction factor against some viruses, such as HIV-1: restricts HIV-1 replication by binding to HIV-1 mRNAs and mediating their degradation via its ribonuclease activity. Also acts as an inhibitor of the E3 ubiquitin-protein ligase ITCH: acts by interacting with the second WW domain of ITCH, leading to compete with ITCH's substrates and impairing ubiquitination of substrates. This Homo sapiens (Human) protein is NEDD4-binding protein 1.